A 1230-amino-acid chain; its full sequence is Cullin-associated NEDD8-dissociated protein 1 (1230 aa).

N-acetylalanine is present on alanine 2. HEAT repeat units follow at residues 2–39 (ASAS…KDSI), 44–81 (DSER…KVKE), 83–119 (QVET…ELPP), 131–165 (CKKI…LSRQ), 171–208 (NFHP…SCGN), 210–247 (VFVG…QAGH), 248–282 (RIGE…FESF), 289–366 (EVYP…TRHE), 370–407 (EFYK…QTRP), 424–467 (PLTM…VLPG), 471–510 (QHIP…NHSP), and 515–552 (PHVQ…VIRP). Lysine 55 carries the N6-acetyllysine modification. Residues 315 to 343 (DEDEDENAMDADGGDDDDQGSDDEYSDDG) form a disordered region. Serine 335 is modified (phosphoserine). A Phosphoserine modification is found at serine 558. HEAT repeat units follow at residues 563 to 602 (PYIK…NLGD), 606 to 643 (SDLP…LKID), 646 to 683 (PVLG…NYSD), 688 to 725 (AMID…VYPS), 729 to 768 (KISG…TGTN), 770 to 808 (LGYM…ALTR), 809 to 845 (ACPK…LGEV), 852 to 889 (SGQL…GNLP), 890 to 927 (EYLP…GLKP), 928 to 960 (YVEN…KLTL), 961 to 998 (IDPE…DHPQ), 1002 to 1039 (PLLK…NKPS), 1043 to 1097 (DLLD…DSCL), 1099 to 1133 (RLDI…LSTL), and 1140 to 1189 (QRLD…IPEA). Lysine 971 is subject to N6-acetyllysine.

Belongs to the CAND family. Interacts with TBP. Part of a complex that contains CUL1 and RBX1. Interacts with unneddylated cullins: interacts with CUL1, CUL2, CUL3, CUL4A, CUL4B and CUL5. Does not bind neddylated CUL1. Interaction with cullins is abolished in presence of COMMD1, which antagonizes with CAND1 for interacting with cullins. Interacts with ERCC6. Interacts with DCUN1D1, DCUN1D2, DCUN1D3, DCUN1D4 and DCUN1D5; these interactions are bridged by cullins and strongly inhibits the neddylation of cullins.

Its subcellular location is the cytoplasm. It is found in the nucleus. Its function is as follows. Key assembly factor of SCF (SKP1-CUL1-F-box protein) E3 ubiquitin ligase complexes that promotes the exchange of the substrate-recognition F-box subunit in SCF complexes, thereby playing a key role in the cellular repertoire of SCF complexes. Acts as a F-box protein exchange factor. The exchange activity of CAND1 is coupled with cycles of neddylation conjugation: in the deneddylated state, cullin-binding CAND1 binds CUL1-RBX1, increasing dissociation of the SCF complex and promoting exchange of the F-box protein. Probably plays a similar role in other cullin-RING E3 ubiquitin ligase complexes. The protein is Cullin-associated NEDD8-dissociated protein 1 (CAND1) of Pongo abelii (Sumatran orangutan).